A 913-amino-acid chain; its full sequence is Eukaryotic translation initiation factor 3 subunit C (913 aa).

Positions Met-1–Ala-22 are disordered. Residues Ser-11–Val-20 show a composition bias toward acidic residues. Phosphoserine is present on residues Ser-34, Ser-165, Ser-177, and Ser-186. Positions Phe-157 to Glu-285 are disordered. Over residues Asp-162–Glu-171 the composition is skewed to acidic residues. Residues Gly-172–Ala-184 are compositionally biased toward basic and acidic residues. Residues Asp-214–Asn-239 show a composition bias toward acidic residues. The span at Met-244–Arg-263 shows a compositional bias: basic and acidic residues. A compositionally biased stretch (basic residues) spans Lys-264 to Lys-276. A PCI domain is found at Phe-645–Pro-821. The tract at residues Arg-856 to Glu-913 is disordered. The segment covering Gln-887–Gln-898 has biased composition (basic residues).

This sequence belongs to the eIF-3 subunit C family. Component of the eukaryotic translation initiation factor 3 (eIF-3) complex. The eIF-3 complex interacts with pix.

The protein localises to the cytoplasm. Functionally, component of the eukaryotic translation initiation factor 3 (eIF-3) complex, which is involved in protein synthesis of a specialized repertoire of mRNAs and, together with other initiation factors, stimulates binding of mRNA and methionyl-tRNAi to the 40S ribosome. The eIF-3 complex specifically targets and initiates translation of a subset of mRNAs involved in cell proliferation. This chain is Eukaryotic translation initiation factor 3 subunit C, found in Drosophila mojavensis (Fruit fly).